Here is a 150-residue protein sequence, read N- to C-terminus: MRSFFLLCALVAVCNAVYTGVAYYDINAGCTGVAYRTSYTQTASCTPIPCTKNTDYQLSILQTCVSAIPQTKGTLEISSYPSHDCSGTPDVGVYNLNTCLPDEQGQFGYLTCNAQYICSDSACKSGCTATPFSDSCTATPRDSTTYKCIP.

The first 14 residues, 1–14 (MRSFFLLCALVAVC), serve as a signal peptide directing secretion.

In Physarum polycephalum (Slime mold), this protein is Plasmin C (PLSC).